A 376-amino-acid chain; its full sequence is Serine/threonine-protein kinase-transforming protein mos (376 aa).

Positions 94 to 376 constitute a Protein kinase domain; it reads VCLMHRLGSG…KALADSIEPM (283 aa). ATP contacts are provided by residues 100-108 and K121; that span reads LGSGGFGSV. D229 serves as the catalytic Proton acceptor.

This sequence belongs to the protein kinase superfamily. Ser/Thr protein kinase family.

The enzyme catalyses L-seryl-[protein] + ATP = O-phospho-L-seryl-[protein] + ADP + H(+). It carries out the reaction L-threonyl-[protein] + ATP = O-phospho-L-threonyl-[protein] + ADP + H(+). The sequence is that of Serine/threonine-protein kinase-transforming protein mos (V-MOS) from Moloney murine sarcoma virus (strain m1) (MoMSV).